A 625-amino-acid polypeptide reads, in one-letter code: Chromatin structure-remodeling complex subunit RSC4 (625 aa).

The segment at 1-35 (MVVKKRKLATEAGGSDERPKYLPGKHPKNQEKTPH) is disordered. 2 Bromo domains span residues 53–158 (WHIP…VLKA) and 181–292 (KLVD…IQKE). Ser-199 and Ser-545 each carry phosphoserine. The span at 536 to 552 (RTSNVNSNLSQPQQQEN) shows a compositional bias: polar residues. Residues 536-555 (RTSNVNSNLSQPQQQENDVI) are disordered.

As to quaternary structure, component of the two forms of the RSC complex composed of at least either RSC1 or RSC2, and ARP7, ARP9, LDB7, NPL6, RSC3, RSC30, RSC4, RSC58, RSC6, RSC8, RSC9, SFH1, STH1, HTL1 and probably RTT102. The complexes interact with histone and histone variant components of centromeric chromatin.

Its subcellular location is the nucleus. Its function is as follows. Component of the chromatin structure remodeling complex (RSC), which is involved in transcription regulation and nucleosome positioning. RSC is responsible for the transfer of a histone octamer from a nucleosome core particle to naked DNA. The reaction requires ATP and involves an activated RSC-nucleosome intermediate. Remodeling reaction also involves DNA translocation, DNA twist and conformational change. As a reconfigurer of centromeric and flanking nucleosomes, RSC complex is required both for proper kinetochore function in chromosome segregation and, via a PKC1-dependent signaling pathway, for organization of the cellular cytoskeleton. This Saccharomyces cerevisiae (strain ATCC 204508 / S288c) (Baker's yeast) protein is Chromatin structure-remodeling complex subunit RSC4 (RSC4).